The following is a 263-amino-acid chain: uncharacterized protein (263 aa).

Residue 31 to 38 (GPTGSGKT) coordinates ATP.

This sequence belongs to the CbbQ/NirQ/NorQ/GpvN family.

This is an uncharacterized protein from Staphylococcus haemolyticus (strain JCSC1435).